The chain runs to 432 residues: Asparagine--tRNA ligase (432 aa).

It belongs to the class-II aminoacyl-tRNA synthetase family. In terms of assembly, homodimer.

It localises to the cytoplasm. The enzyme catalyses tRNA(Asn) + L-asparagine + ATP = L-asparaginyl-tRNA(Asn) + AMP + diphosphate + H(+). The polypeptide is Asparagine--tRNA ligase (Lacticaseibacillus paracasei (strain ATCC 334 / BCRC 17002 / CCUG 31169 / CIP 107868 / KCTC 3260 / NRRL B-441) (Lactobacillus paracasei)).